Here is a 305-residue protein sequence, read N- to C-terminus: 5'-hydroxyaverantin dehydrogenase stcG (305 aa).

Positions 25, 27, 48, 68, 186, 190, and 221 each coordinate NADP(+). Tyr-186 (proton acceptor) is an active-site residue. Lys-190 serves as the catalytic Lowers pKa of active site Tyr.

The protein belongs to the short-chain dehydrogenases/reductases (SDR) family.

It catalyses the reaction (1'S,5'S)-5'-hydroxyaverantin + NAD(+) = (S)-5'-oxoaverantin + NADH + H(+). The enzyme catalyses (1'S,5'R)-5'-hydroxyaverantin + NAD(+) = (S)-5'-oxoaverantin + NADH + 2 H(+). It functions in the pathway mycotoxin biosynthesis; sterigmatocystin biosynthesis. 5'-hydroxyaverantin dehydrogenase; part of the gene cluster that mediates the biosynthesis of sterigmatocystin (ST), a polyketide-derived furanocoumarin which is part of the most toxic and carcinogenic compounds among the known mycotoxins. The first step in the biosynthesis of sterigmatocystin is the production of hexanoate by the fatty acid synthase (FAS) units stcJ and stcK. The polyketide backbone is assembled by the non-reducing polyketide synthase stcA by condensation of the starter hexanoyl-CoA and 7 malonyl-CoA extender units followed by cyclization and release of norsolorinic acid. Norsolorinic acid is the first stable intermediate in the biosynthesis of sterigmatocystin and is converted into averantin (AVN) by the ketoreductase stcE which reduces the hexanoate ketone to an alcohol. Averantin is then oxidized into 5'-hydroxyaverantin (HAVN) by the cytochrome P450 monooxygenase stcF. 5'-hydroxyaverantin is further converted to 5'-oxyaverantin (OAVN) by the 5'-hydroxyaverantin dehydrogenase stcG. The next step is the conversion of OAVN into averufin (AVF) which is catalyzed by a yet to be identified enzyme. The cytochrome P450 monooxygenase stcB and the flavin-binding monooxygenase stcW are both required for the conversion of averufin to 1-hydroxyversicolorone. The esterase stcI probably catalyzes the formation of versiconal hemiacetal acetate from 1-hydroxyversicolorone. The oxydoreductase stcN then probably catalyzes the biosynthetic step from versiconal to versicolorin B (VERB). The next step is performed by the versicolorin B desaturase stcL to produce versicolorin A (VERA). The ketoreductase stcU and the cytochrome P450 monooxygenase stcS are involved in the conversion of versicolorin A to demethylsterigmatocystin. The Baeyer-Villiger oxidas stcQ and the reductase stcR might be involved in the biosynthetic step from versicolorin A to demethylsterigmatocystin. The final step in the biosynthesis of sterigmatocystin is the methylation of demethylsterigmatocystin catalyzed by the methyltransferase stcP. This chain is 5'-hydroxyaverantin dehydrogenase stcG, found in Emericella nidulans (strain FGSC A4 / ATCC 38163 / CBS 112.46 / NRRL 194 / M139) (Aspergillus nidulans).